An 803-amino-acid chain; its full sequence is Phenylalanine--tRNA ligase beta subunit (803 aa).

In terms of domain architecture, tRNA-binding spans A40–A153. The 77-residue stretch at A400–S476 folds into the B5 domain. D454, D460, E463, and E464 together coordinate Mg(2+). Residues S709–R801 form the FDX-ACB domain.

Belongs to the phenylalanyl-tRNA synthetase beta subunit family. Type 1 subfamily. Tetramer of two alpha and two beta subunits. It depends on Mg(2+) as a cofactor.

The protein resides in the cytoplasm. It catalyses the reaction tRNA(Phe) + L-phenylalanine + ATP = L-phenylalanyl-tRNA(Phe) + AMP + diphosphate + H(+). The chain is Phenylalanine--tRNA ligase beta subunit from Chlorobium chlorochromatii (strain CaD3).